A 177-amino-acid polypeptide reads, in one-letter code: Calcium-binding protein CML38 (177 aa).

Over residues 1–11 (MKNNTQPQSSF) the composition is skewed to polar residues. A disordered region spans residues 1-44 (MKNNTQPQSSFKKLCRKLSPKREDSAGEIQQHNSSNGEDKNREL). 4 consecutive EF-hand domains span residues 39 to 74 (DKNR…LGEQ), 75 to 110 (LSDE…DDEE), 111 to 146 (EKKM…LGES), and 147 to 177 (RTTD…LMMR). Ca(2+)-binding residues include aspartate 52, asparagine 54, aspartate 56, arginine 58, glutamate 63, aspartate 88, aspartate 90, aspartate 92, methionine 94, and glutamate 99. Positions 160, 162, 164, and 171 each coordinate Ca(2+).

As to quaternary structure, binds to ABCG36. As to expression, expressed in cotyledons and guard cells of young leaves. In mature root, expressed in the epidermis, trichoblasts, young lateral root and root tip. Expressed from stage 9 to 15 of flower development in anther wall.

Its function is as follows. Potential calcium sensor that binds calcium in vitro. This Arabidopsis thaliana (Mouse-ear cress) protein is Calcium-binding protein CML38.